Consider the following 169-residue polypeptide: Ferric-chelate reductase (NAD(P)H) (169 aa).

Residue Y7 coordinates NADP(+). Residues 27-31 (QIANT), 45-52 (CLNKENDT), 82-84 (RKS), and K89 each bind FMN. NADP(+) is bound by residues H126 and 147-154 (YADYHLMK).

It belongs to the non-flavoprotein flavin reductase family. Homodimer. It depends on FMN as a cofactor. Requires FAD as cofactor.

The enzyme catalyses 2 a Fe(II)-siderophore + NAD(+) + H(+) = 2 a Fe(III)-siderophore + NADH. It carries out the reaction 2 a Fe(II)-siderophore + NADP(+) + H(+) = 2 a Fe(III)-siderophore + NADPH. In terms of biological role, catalyzes the reduction of bound ferric iron (Fe(3+)) in a variety of iron chelators (siderophores) using NAD(P)H as the electron donor, resulting in the release of Fe(2+). Not active with uncomplexed Fe(3+). Also reduces FMN and FAD, but not riboflavin. This is Ferric-chelate reductase (NAD(P)H) from Archaeoglobus fulgidus (strain ATCC 49558 / DSM 4304 / JCM 9628 / NBRC 100126 / VC-16).